A 254-amino-acid polypeptide reads, in one-letter code: PF03932 family protein CutC (254 aa).

This sequence belongs to the CutC family.

The protein localises to the cytoplasm. The polypeptide is PF03932 family protein CutC (Yersinia pestis bv. Antiqua (strain Angola)).